A 161-amino-acid polypeptide reads, in one-letter code: MAVKIKLTRLGKIRNPQYRIAVADARTRRDGRSIEVIGRYHPKEEPSLIEINSERAQYWLSVGAQPTEPVLKLLKITGDWQKFKGLPGAEGRLKVKPPKPSKLELFNAALAAAEGGPTTEATKPKKKSPAKKAKGGEGDADAAAEKVEASAEGEQTESAES.

Residues 114–161 (EGGPTTEATKPKKKSPAKKAKGGEGDADAAAEKVEASAEGEQTESAES) are disordered. A compositionally biased stretch (basic residues) spans 124–133 (PKKKSPAKKA).

The protein belongs to the bacterial ribosomal protein bS16 family.

This is Small ribosomal subunit protein bS16 from Mycobacterium marinum (strain ATCC BAA-535 / M).